The chain runs to 76 residues: uncharacterized protein (76 aa).

The N-terminal stretch at 1 to 20 (MKNAVLVFLLLSVFALSVNA) is a signal peptide.

In terms of tissue distribution, prismatic layer of shell (at protein level). Expressed primarily in the mantle with equal levels in the mantle edge and the mantle pallium.

The protein localises to the secreted. This is an uncharacterized protein from Margaritifera margaritifera (Freshwater pearl mussel).